The primary structure comprises 498 residues: Nucleobase transporter PlAzg2 (498 aa).

Helical transmembrane passes span 88-108, 118-138, 142-162, 169-189, 203-223, 236-256, 259-279, 312-332, 357-377, 388-408, 412-432, 443-463, and 478-498; these read LLAG…NSSI, AGII…GLWG, LVIV…VQGM, ALAA…TSLV, AISV…GGVI, FADP…ILYI, VPGN…LFKA, TLVI…VGLI, ILSG…AAGI, IATG…TLVP, VAPI…HISF, FIIA…IGFI, and VKPL…LQTM.

It belongs to the nucleobase:cation symporter-2 (NCS2) (TC 2.A.40) family. Azg-like subfamily.

It is found in the cell membrane. Inhibited by the proton gradient disruptor carbonyl cyanide m-chlorophenylhydrazone (CCCP), but not by the sodium gradient disruptor ouabain. In terms of biological role, transports adenine, guanine, hypoxanthine, xanthine, cytosine and uracil. Transport is probably proton-dependent. This chain is Nucleobase transporter PlAzg2, found in Paenibacillus larvae subsp. larvae (strain NRRL B-3650 / LMG 16245).